Here is a 691-residue protein sequence, read N- to C-terminus: Elongation factor G (691 aa).

The tr-type G domain maps to 8–282 (ERVRNIGIAA…AVVDYLPAPV (275 aa)). GTP is bound by residues 17-24 (AHIDAGKT), 81-85 (DTPGH), and 135-138 (NKMD).

The protein belongs to the TRAFAC class translation factor GTPase superfamily. Classic translation factor GTPase family. EF-G/EF-2 subfamily.

It is found in the cytoplasm. Functionally, catalyzes the GTP-dependent ribosomal translocation step during translation elongation. During this step, the ribosome changes from the pre-translocational (PRE) to the post-translocational (POST) state as the newly formed A-site-bound peptidyl-tRNA and P-site-bound deacylated tRNA move to the P and E sites, respectively. Catalyzes the coordinated movement of the two tRNA molecules, the mRNA and conformational changes in the ribosome. This Prochlorococcus marinus (strain MIT 9211) protein is Elongation factor G.